The primary structure comprises 485 residues: Glutamyl-tRNA(Gln) amidotransferase subunit A (485 aa).

Catalysis depends on charge relay system residues Lys-78 and Ser-153. The Acyl-ester intermediate role is filled by Ser-177.

It belongs to the amidase family. GatA subfamily. In terms of assembly, heterotrimer of A, B and C subunits.

It carries out the reaction L-glutamyl-tRNA(Gln) + L-glutamine + ATP + H2O = L-glutaminyl-tRNA(Gln) + L-glutamate + ADP + phosphate + H(+). Functionally, allows the formation of correctly charged Gln-tRNA(Gln) through the transamidation of misacylated Glu-tRNA(Gln) in organisms which lack glutaminyl-tRNA synthetase. The reaction takes place in the presence of glutamine and ATP through an activated gamma-phospho-Glu-tRNA(Gln). The chain is Glutamyl-tRNA(Gln) amidotransferase subunit A from Bacillus anthracis (strain A0248).